Reading from the N-terminus, the 1142-residue chain is SNF1-activating kinase 1 (1142 aa).

Residues 22–41 (ELEKSGTSSSVSLRSPTKSS) form a disordered region. Thr43 is subject to Phosphothreonine. Over residues 82–93 (QHQQHISSSLAK) the composition is skewed to polar residues. Positions 82-107 (QHQQHISSSLAKTPTTTSSFCSSGSS) are disordered. Residues 94–107 (TPTTTSSFCSSGSS) show a composition bias toward low complexity. Residues 133 to 448 (YEIIKELGHG…IPAIKKHPFV (316 aa)) enclose the Protein kinase domain. ATP-binding positions include 139–147 (LGHGQHGKV) and Lys162. Asp277 acts as the Proton acceptor in catalysis. 6 disordered regions span residues 634–678 (SPEA…VLPQ), 694–799 (NSLL…NSPI), 825–875 (SHFN…AYSE), 919–971 (KSSL…QKGS), 1005–1027 (SQPI…KATT), and 1066–1142 (STNA…SALP). Residues 640–656 (SVSSVPNLPSAPSSTRL) are compositionally biased toward polar residues. Low complexity predominate over residues 694–706 (NSLLRNSSSHLTS). Residues 707–741 (YNSGRPSSRTGRMNSRNQNLPKIPNSLSKISTTKL) show a composition bias toward polar residues. The segment covering 742–751 (TELRVPKDSE) has biased composition (basic and acidic residues). Positions 785–799 (NINSSDKSGSKNSPI) are enriched in polar residues. 2 stretches are compositionally biased toward low complexity: residues 835 to 868 (SSQS…RNSS) and 920 to 936 (SSLN…SSSS). The span at 958-971 (SKLSELSNSPQKGS) shows a compositional bias: polar residues. Position 964 is a phosphoserine (Ser964). Over residues 1096–1111 (NDEHARNTSCHGDKGQ) the composition is skewed to basic and acidic residues. At Ser1126 the chain carries Phosphoserine. Over residues 1133–1142 (NEEKRRSALP) the composition is skewed to basic and acidic residues.

The protein belongs to the protein kinase superfamily. Ser/Thr protein kinase family. Associates with the SNF1 kinase complex. Interacts with SNF1 and REG1. Post-translationally, autophosphorylated.

It is found in the cytoplasm. It carries out the reaction L-seryl-[protein] + ATP = O-phospho-L-seryl-[protein] + ADP + H(+). It catalyses the reaction L-threonyl-[protein] + ATP = O-phospho-L-threonyl-[protein] + ADP + H(+). In terms of biological role, serine/threonine-protein kinase that phosphorylates SNF1, the catalytic subunit of the SNF1 kinase complex. Acts as an activator of the SNF1 kinase complex and controls its nuclear localization upon glucose and nitrogen depletion. Also required for SNF1 kinase activation under other stress conditions like alkaline pH or presence of cadmium. This is SNF1-activating kinase 1 (SAK1) from Saccharomyces cerevisiae (strain ATCC 204508 / S288c) (Baker's yeast).